The primary structure comprises 469 residues: 3-isopropylmalate dehydratase large subunit (469 aa).

Residues cysteine 347, cysteine 410, and cysteine 413 each contribute to the [4Fe-4S] cluster site.

The protein belongs to the aconitase/IPM isomerase family. LeuC type 1 subfamily. In terms of assembly, heterodimer of LeuC and LeuD. Requires [4Fe-4S] cluster as cofactor.

It catalyses the reaction (2R,3S)-3-isopropylmalate = (2S)-2-isopropylmalate. It functions in the pathway amino-acid biosynthesis; L-leucine biosynthesis; L-leucine from 3-methyl-2-oxobutanoate: step 2/4. Functionally, catalyzes the isomerization between 2-isopropylmalate and 3-isopropylmalate, via the formation of 2-isopropylmaleate. In Polynucleobacter necessarius subsp. necessarius (strain STIR1), this protein is 3-isopropylmalate dehydratase large subunit.